The following is a 699-amino-acid chain: Condensin complex subunit 2 (699 aa).

Disordered regions lie at residues 1-35 (MSTS…SAAA) and 176-203 (ESQA…KRRK).

The protein belongs to the CND2 (condensin subunit 2) family. In terms of assembly, component of the condensin complex, which contains the XCAP-E/SMC2 and XCAP-C/SMC4 heterodimer, and three non SMC subunits that probably regulate the complex: XCAP-H/NCAPH, XCAP-D2/NCAPD2 and XCAP-G/NCAPG. Post-translationally, phosphorylated by CDK1. Its phosphorylation, as well as that of XCAP-D2 and XCAP-G subunits, activates the condensin complex and is required for chromosome condensation.

The protein resides in the nucleus. The protein localises to the cytoplasm. It localises to the chromosome. Its function is as follows. Regulatory subunit of the condensin complex, a complex required for conversion of interphase chromatin into mitotic-like condense chromosomes. The condensin complex probably introduces positive supercoils into relaxed DNA in the presence of type I topoisomerases and converts nicked DNA into positive knotted forms in the presence of type II topoisomerase. The protein is Condensin complex subunit 2 (ncaph) of Xenopus laevis (African clawed frog).